Here is a 204-residue protein sequence, read N- to C-terminus: Holliday junction branch migration complex subunit RuvA (204 aa).

Residues 1–63 form a domain I region; sequence MIASLRGTVI…EDAMKLYGFI (63 aa). Residues 64–142 form a domain II region; it reads DDQSREMFAL…AYTVGVVDDG (79 aa). Residues 143–151 are flexible linker; that stretch reads APTAPTQGV. A domain III region spans residues 152–204; that stretch reads APVVVVDQVTQALTGLGFTEKQADDAVAAVLSADPGLDTSAALRAALAKLGGK.

The protein belongs to the RuvA family. In terms of assembly, homotetramer. Forms an RuvA(8)-RuvB(12)-Holliday junction (HJ) complex. HJ DNA is sandwiched between 2 RuvA tetramers; dsDNA enters through RuvA and exits via RuvB. An RuvB hexamer assembles on each DNA strand where it exits the tetramer. Each RuvB hexamer is contacted by two RuvA subunits (via domain III) on 2 adjacent RuvB subunits; this complex drives branch migration. In the full resolvosome a probable DNA-RuvA(4)-RuvB(12)-RuvC(2) complex forms which resolves the HJ.

Its subcellular location is the cytoplasm. The RuvA-RuvB-RuvC complex processes Holliday junction (HJ) DNA during genetic recombination and DNA repair, while the RuvA-RuvB complex plays an important role in the rescue of blocked DNA replication forks via replication fork reversal (RFR). RuvA specifically binds to HJ cruciform DNA, conferring on it an open structure. The RuvB hexamer acts as an ATP-dependent pump, pulling dsDNA into and through the RuvAB complex. HJ branch migration allows RuvC to scan DNA until it finds its consensus sequence, where it cleaves and resolves the cruciform DNA. The polypeptide is Holliday junction branch migration complex subunit RuvA (Corynebacterium efficiens (strain DSM 44549 / YS-314 / AJ 12310 / JCM 11189 / NBRC 100395)).